We begin with the raw amino-acid sequence, 142 residues long: Large ribosomal subunit protein uL11 (142 aa).

This sequence belongs to the universal ribosomal protein uL11 family. As to quaternary structure, part of the ribosomal stalk of the 50S ribosomal subunit. Interacts with L10 and the large rRNA to form the base of the stalk. L10 forms an elongated spine to which L12 dimers bind in a sequential fashion forming a multimeric L10(L12)X complex. Post-translationally, one or more lysine residues are methylated.

Functionally, forms part of the ribosomal stalk which helps the ribosome interact with GTP-bound translation factors. This Alcanivorax borkumensis (strain ATCC 700651 / DSM 11573 / NCIMB 13689 / SK2) protein is Large ribosomal subunit protein uL11.